The chain runs to 668 residues: MVLQQTEPTDGADRKASDGPLTVTAPVPYAAGPTLRNPFPPIADYGFLSDCETTCLISSAGSVEWLCVPRPDSPSVFGAILDRGAGHFRLGPYGVSVPAARRYLPGSLILETTWQTHTGWLIVRDALVMGPWHDIDTRSRTHRRTPMDWDAEHILLRTVRCVSGTVELVMSCEPAFDYHRVSATWEYSGPAYGEAIARASRNPDSHPTLRLTTNLRIGIEGREARARTRLTEGDNVFVALSWSKHPAPQTYEEAADKMWKTSEAWRQWINVGDFPDHPWRAYLQRSALTLKGLTYSPTGALLAAPTTSLPETPQGERNWDYRYSWIRDSTFALWGLYTLGLDREADDFFSFIADVSGANNGERHPLQVMYGVGGERSLVEEELHHLSGYDNSRPVRIGNGAYNQRQHDIWGTMLDSVYLHAKSREQIPDALWPVLKNQVEEAIKHWKEPDRGIWEVRGEPQHFTSSKIMCWVALDRGSKLAELQGEKSYAQQWRAIAEEIKADVLARGVDKRGVLTQRYGDDALDASLLLAVLTRFLPADDPRIRATVLAIADELTEDGLVLRYRVEETDDGLAGEEGTFTICSFWLVSALVEIGEISRAKHLCERLLSFASPLHLYAEEIEPRTGRHLGNFPQAFTHLALINAVVHVIRAEEEADSSGVFVPANAPM.

Residues 1–23 form a disordered region; it reads MVLQQTEPTDGADRKASDGPLTV.

The protein belongs to the glycosyl hydrolase 15 family. In terms of assembly, homomultimer of 20 or more subunits. The cofactor is Mg(2+). Phosphate is required as a cofactor.

The enzyme catalyses alpha,alpha-trehalose + H2O = alpha-D-glucose + beta-D-glucose. It participates in glycan degradation; trehalose degradation; D-glucose from alpha,alpha-trehalose: step 1/1. Inhibited by pyrophosphate and polyphosphates. Also competitively inhibited by validoxylamine and castanospermine, but not by trehazolin. Functionally, catalyzes the hydrolysis of alpha,alpha-trehalose into two molecules of D-glucose. Does not hydrolyze maltose, isomaltose, sucrose, cellobiose, p-nitrophenyl-alpha-D-glucopyranoside, and methyl-alpha-D-glucopyranoside. Is also inactive on alpha,beta-trehalose, beta,beta-trehalose, alpha,alpha-trehalose-6,6'-dibehenate, trehalulose, nigerose, and trehalose dimycolate. The protein is Trehalase of Mycolicibacterium smegmatis (strain ATCC 700084 / mc(2)155) (Mycobacterium smegmatis).